The chain runs to 162 residues: uncharacterized protein (162 aa).

It is found in the cytoplasm. Its subcellular location is the nucleus. This is an uncharacterized protein from Schizosaccharomyces pombe (strain 972 / ATCC 24843) (Fission yeast).